We begin with the raw amino-acid sequence, 705 residues long: Fatty acid oxidation complex subunit alpha (705 aa).

An enoyl-CoA hydratase region spans residues 1-190; that stretch reads MSEQKAFNLK…KLGVVDACVP (190 aa). The segment at 308 to 705 is 3-hydroxyacyl-CoA dehydrogenase; sequence SKVGMVGVLG…AGEGRRFYDN (398 aa).

This sequence in the N-terminal section; belongs to the enoyl-CoA hydratase/isomerase family. It in the central section; belongs to the 3-hydroxyacyl-CoA dehydrogenase family. In terms of assembly, heterotetramer of two alpha chains (FadJ) and two beta chains (FadI).

It is found in the cytoplasm. The catalysed reaction is a (3S)-3-hydroxyacyl-CoA = a (2E)-enoyl-CoA + H2O. It carries out the reaction a 4-saturated-(3S)-3-hydroxyacyl-CoA = a (3E)-enoyl-CoA + H2O. It catalyses the reaction a (3S)-3-hydroxyacyl-CoA + NAD(+) = a 3-oxoacyl-CoA + NADH + H(+). The enzyme catalyses (3S)-3-hydroxybutanoyl-CoA = (3R)-3-hydroxybutanoyl-CoA. It functions in the pathway lipid metabolism; fatty acid beta-oxidation. Its function is as follows. Catalyzes the formation of a hydroxyacyl-CoA by addition of water on enoyl-CoA. Also exhibits 3-hydroxyacyl-CoA epimerase and 3-hydroxyacyl-CoA dehydrogenase activities. In Vibrio vulnificus (strain CMCP6), this protein is Fatty acid oxidation complex subunit alpha.